The chain runs to 498 residues: Lysine--tRNA ligase (498 aa).

Mg(2+) is bound by residues glutamate 407 and glutamate 414.

The protein belongs to the class-II aminoacyl-tRNA synthetase family. Homodimer. Mg(2+) serves as cofactor.

It localises to the cytoplasm. The enzyme catalyses tRNA(Lys) + L-lysine + ATP = L-lysyl-tRNA(Lys) + AMP + diphosphate. In Rhizobium meliloti (strain 1021) (Ensifer meliloti), this protein is Lysine--tRNA ligase (lysS).